A 371-amino-acid polypeptide reads, in one-letter code: uncharacterized protein (371 aa).

A helical membrane pass occupies residues 17–33; the sequence is FLLFSVVLIIVMTTLVF.

The protein to S.pombe SpBC4C3.08 and SpBC4C3.09.

Its subcellular location is the membrane. This is an uncharacterized protein from Schizosaccharomyces pombe (strain 972 / ATCC 24843) (Fission yeast).